The following is a 361-amino-acid chain: Phosphoserine aminotransferase (361 aa).

2 residues coordinate L-glutamate: S9 and R42. Pyridoxal 5'-phosphate is bound by residues A76–R77, W102, T153, D173, and Q196. At K197 the chain carries N6-(pyridoxal phosphate)lysine. A pyridoxal 5'-phosphate-binding site is contributed by N238–T239.

Belongs to the class-V pyridoxal-phosphate-dependent aminotransferase family. SerC subfamily. As to quaternary structure, homodimer. It depends on pyridoxal 5'-phosphate as a cofactor.

It localises to the cytoplasm. It carries out the reaction O-phospho-L-serine + 2-oxoglutarate = 3-phosphooxypyruvate + L-glutamate. The enzyme catalyses 4-(phosphooxy)-L-threonine + 2-oxoglutarate = (R)-3-hydroxy-2-oxo-4-phosphooxybutanoate + L-glutamate. It functions in the pathway amino-acid biosynthesis; L-serine biosynthesis; L-serine from 3-phospho-D-glycerate: step 2/3. Its pathway is cofactor biosynthesis; pyridoxine 5'-phosphate biosynthesis; pyridoxine 5'-phosphate from D-erythrose 4-phosphate: step 3/5. In terms of biological role, catalyzes the reversible conversion of 3-phosphohydroxypyruvate to phosphoserine and of 3-hydroxy-2-oxo-4-phosphonooxybutanoate to phosphohydroxythreonine. The chain is Phosphoserine aminotransferase from Sodalis glossinidius (strain morsitans).